The chain runs to 178 residues: Interleukin-10 (178 aa).

The N-terminal stretch at 1 to 18 (MPGSALLCCLALLAGVKA) is a signal peptide. Cystine bridges form between Cys30-Cys126 and Cys80-Cys132. The N-linked (GlcNAc...) asparagine glycan is linked to Asn67. The N-linked (GlcNAc...) asparagine glycan is linked to Asn134.

The protein belongs to the IL-10 family. In terms of assembly, homodimer. Interacts with IL10RA and IL10RB.

The protein resides in the secreted. Functionally, major immune regulatory cytokine that acts on many cells of the immune system where it has profound anti-inflammatory functions, limiting excessive tissue disruption caused by inflammation. Mechanistically, IL10 binds to its heterotetrameric receptor comprising IL10RA and IL10RB leading to JAK1 and STAT2-mediated phosphorylation of STAT3. In turn, STAT3 translocates to the nucleus where it drives expression of anti-inflammatory mediators. Targets antigen-presenting cells (APCs) such as macrophages and monocytes and inhibits their release of pro-inflammatory cytokines including granulocyte-macrophage colony-stimulating factor /GM-CSF, granulocyte colony-stimulating factor/G-CSF, IL-1 alpha, IL-1 beta, IL-6, IL-8 and TNF-alpha. Also interferes with antigen presentation by reducing the expression of MHC-class II and co-stimulatory molecules, thereby inhibiting their ability to induce T cell activation. In addition, controls the inflammatory response of macrophages by reprogramming essential metabolic pathways including mTOR signaling. The protein is Interleukin-10 (IL10) of Cavia porcellus (Guinea pig).